Consider the following 566-residue polypeptide: Cytoplasmic polyadenylation element-binding protein 2 (566 aa).

Disordered stretches follow at residues 17-46 (FWGNGDQLEGKTLSSIKQQESKKMDDSVEG) and 64-98 (LERLHEKEEQECEEERLDWSEKVDSEEEEEDIQEQ). Residues 87 to 98 (DSEEEEEDIQEQ) are compositionally biased toward acidic residues. The RRM domain occupies 430 to 512 (MVAFIGGVPR…KRVEIKPYFF (83 aa)).

In terms of biological role, cytoplasmic polyadenylation element binding protein that binds to and regulates the translation of specific mRNAs. The chain is Cytoplasmic polyadenylation element-binding protein 2 (cpb-2) from Caenorhabditis briggsae.